The sequence spans 299 residues: ATP phosphoribosyltransferase (299 aa).

This sequence belongs to the ATP phosphoribosyltransferase family. Long subfamily. It depends on Mg(2+) as a cofactor.

The protein localises to the cytoplasm. The enzyme catalyses 1-(5-phospho-beta-D-ribosyl)-ATP + diphosphate = 5-phospho-alpha-D-ribose 1-diphosphate + ATP. Its pathway is amino-acid biosynthesis; L-histidine biosynthesis; L-histidine from 5-phospho-alpha-D-ribose 1-diphosphate: step 1/9. Its activity is regulated as follows. Feedback inhibited by histidine. Functionally, catalyzes the condensation of ATP and 5-phosphoribose 1-diphosphate to form N'-(5'-phosphoribosyl)-ATP (PR-ATP). Has a crucial role in the pathway because the rate of histidine biosynthesis seems to be controlled primarily by regulation of HisG enzymatic activity. The chain is ATP phosphoribosyltransferase from Campylobacter lari (strain RM2100 / D67 / ATCC BAA-1060).